Reading from the N-terminus, the 458-residue chain is Homogentisate 1,2-dioxygenase (458 aa).

His-308 serves as the catalytic Proton acceptor. Fe cation-binding residues include His-351 and Glu-357. Residues Tyr-366 and His-387 each contribute to the homogentisate site. Residue His-387 coordinates Fe cation.

This sequence belongs to the homogentisate dioxygenase family. Hexamer; dimer of trimers. Fe cation serves as cofactor.

The catalysed reaction is homogentisate + O2 = 4-maleylacetoacetate + H(+). It participates in amino-acid degradation; L-phenylalanine degradation; acetoacetate and fumarate from L-phenylalanine: step 4/6. Functionally, involved in the catabolism of homogentisate (2,5-dihydroxyphenylacetate or 2,5-OH-PhAc), a central intermediate in the degradation of phenylalanine and tyrosine. Catalyzes the oxidative ring cleavage of the aromatic ring of homogentisate to yield maleylacetoacetate. The sequence is that of Homogentisate 1,2-dioxygenase from Xanthomonas axonopodis pv. citri (strain 306).